Here is a 407-residue protein sequence, read N- to C-terminus: MPRGHKSKLRTCEKRQETNGQPQGLTGPQATAEKQEESHSSSSSSRACLGDCRRSSDASIPQESQGVSPTGSPDAVVSYSKSDVAANGQDEKSPSTSRDASVPQESQGASPTGSPDAGVSGSKYDVAANGQDEKSPSTSHDVSVPQESQGASPTGSPDAGVSGSKYDVAAEGEDEESVSASQKAIIFKRLSKDAVKKKACTLAQFLQKKFEKKESILKADMLKCVRREYKPYFPQILNRTSQHLVVAFGVELKEMDSSGESYTLVSKLGLPSEGILSGDNALPKSGLLMSLLVVIFMNGNCATEEEVWEFLGLLGIYDGILHSIYGDARKIITEDLVQDKYVVYRQVCNSDPPCYEFLWGPRAYAETTKMRVLRVLADSSNTSPGLYPHLYEDALIDEVERALRLRA.

Residues 1–175 (MPRGHKSKLR…YDVAAEGEDE (175 aa)) form a disordered region. Polar residues-rich tracts occupy residues 18–29 (TNGQPQGLTGPQ), 57–71 (DASI…SPTG), 94–113 (PSTS…SPTG), and 136–155 (PSTS…SPTG). An MAGE domain is found at 195 to 394 (VKKKACTLAQ…GLYPHLYEDA (200 aa)).

As to expression, expressed in testis. Not expressed in other normal tissues, but is expressed in tumors of different histological origins.

The polypeptide is Melanoma-associated antigen B6 (MAGEB6) (Homo sapiens (Human)).